The chain runs to 259 residues: MERKINRREKEKEYEGKHNSLEDTDQGKNCKSTLMTLNVGGYLYITQKQTLTKYPDTFLEGIVNGKILCPFDADGHYFIDRDGLLFRHVLNFLRNGELLLPEGFRENQLLAQEAEFFQLKGLAEEVKSRWEKEQLTPRETTFLEITDNHDRSQGLRIFCNAPDFISKIKSRIVLVSKSRLDGFPEEFSISSNIIQFKYFIKSENGTRLVLKEDNTFVCTLETLKFEAIMMALKCGFRLLTSLDCSKGSIVHSDALHFIK.

Positions 1-25 (MERKINRREKEKEYEGKHNSLEDTD) are disordered. The region spanning 33-134 (TLMTLNVGGY…EVKSRWEKEQ (102 aa)) is the BTB domain.

The sequence is that of BTB/POZ domain-containing protein KCTD4 (KCTD4) from Homo sapiens (Human).